The sequence spans 634 residues: Chaperone protein dnaK2 (634 aa).

Thr197 is modified (phosphothreonine; by autocatalysis). Residues 601-620 are compositionally biased toward low complexity; that stretch reads SAEASANAQAGPSSSSSSSS. The disordered stretch occupies residues 601 to 634; the sequence is SAEASANAQAGPSSSSSSSSGDDDVIDAEFSESK. Residues 621–634 show a composition bias toward acidic residues; that stretch reads GDDDVIDAEFSESK.

It belongs to the heat shock protein 70 family.

In terms of biological role, acts as a chaperone. The polypeptide is Chaperone protein dnaK2 (dnaK2) (Synechococcus elongatus (strain ATCC 33912 / PCC 7942 / FACHB-805) (Anacystis nidulans R2)).